The following is a 1417-amino-acid chain: DNA-directed RNA polymerase subunit beta' (1417 aa).

4 residues coordinate Zn(2+): C68, C70, C83, and C86. Mg(2+) is bound by residues D458, D460, and D462. Zn(2+)-binding residues include C811, C884, C891, and C894.

This sequence belongs to the RNA polymerase beta' chain family. In terms of assembly, the RNAP catalytic core consists of 2 alpha, 1 beta, 1 beta' and 1 omega subunit. When a sigma factor is associated with the core the holoenzyme is formed, which can initiate transcription. Requires Mg(2+) as cofactor. The cofactor is Zn(2+).

The enzyme catalyses RNA(n) + a ribonucleoside 5'-triphosphate = RNA(n+1) + diphosphate. Its function is as follows. DNA-dependent RNA polymerase catalyzes the transcription of DNA into RNA using the four ribonucleoside triphosphates as substrates. The sequence is that of DNA-directed RNA polymerase subunit beta' from Francisella tularensis subsp. tularensis (strain FSC 198).